The primary structure comprises 189 residues: Elongation factor P (189 aa).

Position 34 is an N6-(3,6-diaminohexanoyl)-5-hydroxylysine (Lys34).

The protein belongs to the elongation factor P family. Post-translationally, may be beta-lysylated on the epsilon-amino group of Lys-34 by the combined action of EpmA and EpmB, and then hydroxylated on the C5 position of the same residue by EpmC (if this protein is present). Lysylation is critical for the stimulatory effect of EF-P on peptide-bond formation. The lysylation moiety may extend toward the peptidyltransferase center and stabilize the terminal 3-CCA end of the tRNA. Hydroxylation of the C5 position on Lys-34 may allow additional potential stabilizing hydrogen-bond interactions with the P-tRNA.

The protein resides in the cytoplasm. Its pathway is protein biosynthesis; polypeptide chain elongation. Involved in peptide bond synthesis. Alleviates ribosome stalling that occurs when 3 or more consecutive Pro residues or the sequence PPG is present in a protein, possibly by augmenting the peptidyl transferase activity of the ribosome. Modification of Lys-34 is required for alleviation. The sequence is that of Elongation factor P from Legionella pneumophila (strain Paris).